The chain runs to 263 residues: Undecaprenyl-diphosphatase (263 aa).

A run of 7 helical transmembrane segments spans residues 38–58, 75–95, 108–128, 135–155, 181–201, 217–237, and 242–262; these read RSDF…CLAL, RDYV…GLIV, PVAW…HFAG, VVTW…GVFP, FVFM…LLEM, VAFI…LGYI, and FTVF…WLPA.

Belongs to the UppP family.

The protein resides in the cell inner membrane. The catalysed reaction is di-trans,octa-cis-undecaprenyl diphosphate + H2O = di-trans,octa-cis-undecaprenyl phosphate + phosphate + H(+). Catalyzes the dephosphorylation of undecaprenyl diphosphate (UPP). Confers resistance to bacitracin. The polypeptide is Undecaprenyl-diphosphatase (Xanthomonas campestris pv. campestris (strain 8004)).